The chain runs to 127 residues: Large ribosomal subunit protein bL20 (127 aa).

The protein belongs to the bacterial ribosomal protein bL20 family.

Its function is as follows. Binds directly to 23S ribosomal RNA and is necessary for the in vitro assembly process of the 50S ribosomal subunit. It is not involved in the protein synthesizing functions of that subunit. This chain is Large ribosomal subunit protein bL20, found in Bifidobacterium longum (strain NCC 2705).